Reading from the N-terminus, the 281-residue chain is Large ribosomal subunit protein uL22 (281 aa).

The interval 1 to 225 is large ribosomal subunit protein uL22; the sequence is MASPMGSTAS…KAGGAAEAEV (225 aa). Disordered stretches follow at residues 137–175 and 199–281; these read RATK…PVAA and AVAS…GGTR. The segment covering 139-153 has biased composition (basic residues); that stretch reads TKKAVPKGARHRRRL. Composition is skewed to low complexity over residues 159–175 and 199–239; these read PAAS…PVAA and AVAS…APAA. The segment at 226 to 281 is unknown; that stretch reads ATTDEQTTETAPAAEAEKPAVRRPAARKSTTSARRRAAETEGHDSDAESTDEGGTR. The span at 261–271 shows a compositional bias: basic and acidic residues; sequence RAAETEGHDSD. The segment covering 272 to 281 has biased composition (acidic residues); that stretch reads AESTDEGGTR.

The protein belongs to the universal ribosomal protein uL22 family. As to quaternary structure, part of the 50S ribosomal subunit.

In terms of biological role, the globular domain of the protein is located near the polypeptide exit tunnel on the outside of the subunit, while an extended beta-hairpin is found that lines the wall of the exit tunnel in the center of the 70S ribosome. Functionally, this protein binds specifically to 23S rRNA; its binding is stimulated by other ribosomal proteins, e.g. L4, L17, and L20. It is important during the early stages of 50S assembly. It makes multiple contacts with different domains of the 23S rRNA in the assembled 50S subunit and ribosome. The sequence is that of Large ribosomal subunit protein uL22 from Acidothermus cellulolyticus (strain ATCC 43068 / DSM 8971 / 11B).